The following is a 929-amino-acid chain: Chitin synthase 1 (929 aa).

Positions 1–12 (MAYRGAGGPGGG) are enriched in gly residues. 2 disordered regions span residues 1–43 (MAYR…QEDE) and 114–156 (MGGH…GGGL). 2 stretches are compositionally biased toward polar residues: residues 21-33 (QDLNPHSQYSNVQ) and 140-149 (SWVQRQNPNA). Residue asparagine 560 is glycosylated (N-linked (GlcNAc...) asparagine). Helical transmembrane passes span 587–607 (FFFHVQLIYNILNVIFTWFSL), 643–663 (LFNAVLKYIYLAFVILQFILA), 678–698 (SFFVFSVIQAYILVLSGYLVV), 730–750 (VILLALIAIYGIYFIASFMYL), and 758–778 (SFPYYMLLMSTYINILMVYAF). Residue asparagine 801 is glycosylated (N-linked (GlcNAc...) asparagine). 2 helical membrane-spanning segments follow: residues 857–877 (TMLVVLWLFSNCLLAVAITSD) and 897–917 (FLLFSTAFLSLIRFIGFLWFL).

It belongs to the chitin synthase family. Class III subfamily.

It localises to the cell membrane. It catalyses the reaction [(1-&gt;4)-N-acetyl-beta-D-glucosaminyl](n) + UDP-N-acetyl-alpha-D-glucosamine = [(1-&gt;4)-N-acetyl-beta-D-glucosaminyl](n+1) + UDP + H(+). In terms of biological role, polymerizes chitin, a structural polymer of the cell wall and septum, by transferring the sugar moiety of UDP-GlcNAc to the non-reducing end of the growing chitin polymer. CHS1 and CHS3 have compensatory functions in cell wall modifications in responses to stresses. Involved in appressoria formation and required for full virulence. In Pyricularia oryzae (strain 70-15 / ATCC MYA-4617 / FGSC 8958) (Rice blast fungus), this protein is Chitin synthase 1.